Reading from the N-terminus, the 1752-residue chain is Chitin synthase E (1752 aa).

Residue 1 to 8 participates in ATP binding; that stretch reads GESGSGKT. The tract at residues 492–520 is disordered; the sequence is SSKPLRMPSMARRKTSPSSRLAFDAGDAD. The tract at residues 558-582 is actin-binding; sequence LDIVNKCLSSTNLNPYFIFCLKPND. Helical transmembrane passes span 789–809 and 828–848; these read WIAL…KLFG and LIIW…PGLV. The Cytochrome b5 heme-binding domain maps to 852-940; the sequence is QHVYSAAELS…LLDYRPTNIS (89 aa). N-linked (GlcNAc...) asparagine glycosylation is found at Asn938 and Asn963. Residues 1099–1119 form a helical membrane-spanning segment; the sequence is FILAISVLICSIIVFKFLAAL. 3 N-linked (GlcNAc...) asparagine glycosylation sites follow: Asn1322, Asn1356, and Asn1462. Helical transmembrane passes span 1494–1514, 1520–1540, and 1547–1567; these read LSTV…YWLV, IPYT…LIFI, and MVGW…PCPS. Residue Asn1685 is glycosylated (N-linked (GlcNAc...) asparagine). Positions 1689–1744 constitute a DEK-C domain; sequence LPSDDAILAEIREILRTADLMSVTKKSIKLELERAFGVNLDLKRPYINSGKGYTFP.

It in the N-terminal section; belongs to the TRAFAC class myosin-kinesin ATPase superfamily. Myosin family. The protein in the C-terminal section; belongs to the chitin synthase family. Class V subfamily.

Its subcellular location is the cell membrane. It is found in the cell septum. It localises to the cell tip. The catalysed reaction is [(1-&gt;4)-N-acetyl-beta-D-glucosaminyl](n) + UDP-N-acetyl-alpha-D-glucosamine = [(1-&gt;4)-N-acetyl-beta-D-glucosaminyl](n+1) + UDP + H(+). Functionally, polymerizes chitin, a structural polymer of the cell wall and septum, by transferring the sugar moiety of UDP-GlcNAc to the non-reducing end of the growing chitin polymer. Important for hyphal growth and conidiophore development but not pathogenicity. This Aspergillus fumigatus (Neosartorya fumigata) protein is Chitin synthase E.